We begin with the raw amino-acid sequence, 373 residues long: Melanoma-associated antigen C2 (373 aa).

Residues 1 to 102 (MPPVPGVPFR…QGPSQSPLSS (102 aa)) form a disordered region. Over residues 40-60 (SSASSTLYLVFSPSSFSTSSS) the composition is skewed to low complexity. Over residues 85-94 (SSPPQGPPQG) the composition is skewed to pro residues. Residues 135–373 (SSFTYTLDEK…VMSSNVSFSE (239 aa)) are interaction with TRIM28. The region spanning 141-336 (LDEKVAELVE…SSFPSWYKDA (196 aa)) is the MAGE domain.

As to quaternary structure, interacts with TRIM28 and UBE2H. In terms of tissue distribution, not expressed in normal tissues, except in germ cells in the seminiferous tubules and in Purkinje cells of the cerebellum. Expressed in various tumors, including melanoma, lymphoma, as well as pancreatic cancer, mammary gland cancer, non-small cell lung cancer and liver cancer. In hepatocellular carcinoma, there is an inverse correlation between tumor differentiation and protein expression, i.e. the lower the differentiation, the higher percentage of expression.

It localises to the cytoplasm. Its subcellular location is the nucleus. Its function is as follows. Proposed to enhance ubiquitin ligase activity of RING-type zinc finger-containing E3 ubiquitin-protein ligases. In vitro enhances ubiquitin ligase activity of TRIM28 and stimulates p53/TP53 ubiquitination in presence of Ubl-conjugating enzyme UBE2H leading to p53/TP53 degradation. Proposed to act through recruitment and/or stabilization of the Ubl-conjugating enzymes (E2) at the E3:substrate complex. This Homo sapiens (Human) protein is Melanoma-associated antigen C2 (MAGEC2).